The following is a 657-amino-acid chain: tRNA 5-methylaminomethyl-2-thiouridine biosynthesis bifunctional protein MnmC (657 aa).

The tract at residues M1 to T238 is tRNA (mnm(5)s(2)U34)-methyltransferase. The segment at I265–K657 is FAD-dependent cmnm(5)s(2)U34 oxidoreductase.

In the N-terminal section; belongs to the methyltransferase superfamily. tRNA (mnm(5)s(2)U34)-methyltransferase family. This sequence in the C-terminal section; belongs to the DAO family. FAD serves as cofactor.

It localises to the cytoplasm. The catalysed reaction is 5-aminomethyl-2-thiouridine(34) in tRNA + S-adenosyl-L-methionine = 5-methylaminomethyl-2-thiouridine(34) in tRNA + S-adenosyl-L-homocysteine + H(+). Its function is as follows. Catalyzes the last two steps in the biosynthesis of 5-methylaminomethyl-2-thiouridine (mnm(5)s(2)U) at the wobble position (U34) in tRNA. Catalyzes the FAD-dependent demodification of cmnm(5)s(2)U34 to nm(5)s(2)U34, followed by the transfer of a methyl group from S-adenosyl-L-methionine to nm(5)s(2)U34, to form mnm(5)s(2)U34. In Pseudomonas putida (strain W619), this protein is tRNA 5-methylaminomethyl-2-thiouridine biosynthesis bifunctional protein MnmC.